Here is a 150-residue protein sequence, read N- to C-terminus: 3-hydroxyacyl-[acyl-carrier-protein] dehydratase FabZ (150 aa).

His54 is a catalytic residue.

Belongs to the thioester dehydratase family. FabZ subfamily.

It localises to the cytoplasm. The enzyme catalyses a (3R)-hydroxyacyl-[ACP] = a (2E)-enoyl-[ACP] + H2O. Involved in unsaturated fatty acids biosynthesis. Catalyzes the dehydration of short chain beta-hydroxyacyl-ACPs and long chain saturated and unsaturated beta-hydroxyacyl-ACPs. This is 3-hydroxyacyl-[acyl-carrier-protein] dehydratase FabZ from Vibrio atlanticus (strain LGP32) (Vibrio splendidus (strain Mel32)).